Here is a 284-residue protein sequence, read N- to C-terminus: Succinate dehydrogenase [ubiquinone] iron-sulfur subunit, mitochondrial (284 aa).

A mitochondrion-targeting transit peptide spans 1-26; it reads MAAVVFSLRRSGPVFRLPGVLQVCRG. In terms of domain architecture, 2Fe-2S ferredoxin-type spans 44–137; sequence KKFAIYRWDP…VSKIYPLPHM (94 aa). [2Fe-2S] cluster is bound by residues C97, C102, C105, and C117. One can recognise a 4Fe-4S ferredoxin-type domain in the interval 180 to 210; it reads DRDKLDGLYECILCACCSTSCPSYWWNADKY. [4Fe-4S] cluster-binding residues include C190, C193, and C196. A [3Fe-4S] cluster-binding site is contributed by C200. W205 serves as a coordination point for a ubiquinone. Positions 247 and 253 each coordinate [3Fe-4S] cluster. C257 serves as a coordination point for [4Fe-4S] cluster.

Belongs to the succinate dehydrogenase/fumarate reductase iron-sulfur protein family. As to quaternary structure, component of complex II composed of four subunits: the flavoprotein (FP) sdha, iron-sulfur protein (IP) sdhb, and a cytochrome b composed of sdhc and sdhd. The cofactor is [2Fe-2S] cluster. [3Fe-4S] cluster is required as a cofactor. [4Fe-4S] cluster serves as cofactor.

Its subcellular location is the mitochondrion inner membrane. The catalysed reaction is a quinone + succinate = fumarate + a quinol. It catalyses the reaction (R)-malate + a quinone = enol-oxaloacetate + a quinol. The enzyme catalyses (S)-malate + a quinone = enol-oxaloacetate + a quinol. It participates in carbohydrate metabolism; tricarboxylic acid cycle; fumarate from succinate (eukaryal route): step 1/1. With respect to regulation, enol-oxaloacetate inhibits the succinate dehydrogenase activity. Its function is as follows. Iron-sulfur protein (IP) subunit of the succinate dehydrogenase complex (mitochondrial respiratory chain complex II), responsible for transferring electrons from succinate to ubiquinone (coenzyme Q). SDH also oxidizes malate to the non-canonical enol form of oxaloacetate, enol-oxaloacetate. Enol-oxaloacetate, which is a potent inhibitor of the succinate dehydrogenase activity, is further isomerized into keto-oxaloacetate. In Xenopus tropicalis (Western clawed frog), this protein is Succinate dehydrogenase [ubiquinone] iron-sulfur subunit, mitochondrial (sdhb).